A 236-amino-acid polypeptide reads, in one-letter code: 2-C-methyl-D-erythritol 4-phosphate cytidylyltransferase (236 aa).

Belongs to the IspD/TarI cytidylyltransferase family. IspD subfamily. In terms of assembly, homodimer.

The catalysed reaction is 2-C-methyl-D-erythritol 4-phosphate + CTP + H(+) = 4-CDP-2-C-methyl-D-erythritol + diphosphate. It participates in isoprenoid biosynthesis; isopentenyl diphosphate biosynthesis via DXP pathway; isopentenyl diphosphate from 1-deoxy-D-xylulose 5-phosphate: step 2/6. Its function is as follows. Catalyzes the formation of 4-diphosphocytidyl-2-C-methyl-D-erythritol from CTP and 2-C-methyl-D-erythritol 4-phosphate (MEP). The protein is 2-C-methyl-D-erythritol 4-phosphate cytidylyltransferase of Salmonella schwarzengrund (strain CVM19633).